Reading from the N-terminus, the 140-residue chain is Phosphoribosyl-AMP cyclohydrolase (140 aa).

Position 84 (D84) interacts with Mg(2+). Residue C85 coordinates Zn(2+). Residues D86 and D88 each coordinate Mg(2+). Residues C101 and C108 each contribute to the Zn(2+) site.

It belongs to the PRA-CH family. In terms of assembly, homodimer. It depends on Mg(2+) as a cofactor. Zn(2+) serves as cofactor.

It localises to the cytoplasm. The enzyme catalyses 1-(5-phospho-beta-D-ribosyl)-5'-AMP + H2O = 1-(5-phospho-beta-D-ribosyl)-5-[(5-phospho-beta-D-ribosylamino)methylideneamino]imidazole-4-carboxamide. The protein operates within amino-acid biosynthesis; L-histidine biosynthesis; L-histidine from 5-phospho-alpha-D-ribose 1-diphosphate: step 3/9. Functionally, catalyzes the hydrolysis of the adenine ring of phosphoribosyl-AMP. This is Phosphoribosyl-AMP cyclohydrolase from Chloroherpeton thalassium (strain ATCC 35110 / GB-78).